The primary structure comprises 650 residues: MGKIIGIDLGTTNSCVAIMEGNQVKVIENSEGTRTTPSIIAYMDDNEVLVGAPAKRQSVTNPRNTLFAVKRLIGRRFEEKEVQKDIGLMPYAIIKADNGDAWVEAHGEKLAPPQVSAEVLRKMKKTAEDYLGEPVTEAVITVPAYFNDSQRQATKDAGRIAGLEVKRIINEPTAAALAFGLDKAEKGDRKIAVYDLGGGTFDVSIIEIADVDGEMQFEVLSTNGDTFLGGEDFDQRIIDYIIGEFKKEQGVDLSKDVLALQRLKEAAEKAKIELSSSQQTEINLPYITADASGPKHLNLKITRAKLEALVEDLVERTIEPCRIAIKDAGVKVSDIDDVILVGGQTRMPKVQEKVKEFFGKDPRRDVNPDEAVAVGAAIQGQVLSGDRKDVLLLDVTPLSLGIETLGGVMTKMISKNTTIPTKHAQVYSTADDNQSAVTIKVFQGEREMAAGNKLLGEFNLEGIPPSPRGVPQIEVTFDIDANGILHVGAKDKATGKENKITIKANSGLTDAEIDQMIKDAEANAAEDHKLRELADSRNQGDALVHSTKKALTEYGDKLDAGEKEKIEAALKSLEDALKDTSADKAAIDAKVEELGQVSQKLGEKMYADMQAQQAGAAGAAGAAEGAAHAGGAQQAADDVVDAEFKEVKKD.

Thr-200 is subject to Phosphothreonine; by autocatalysis. Residues 612 to 636 (QQAGAAGAAGAAEGAAHAGGAQQAA) are compositionally biased toward low complexity. The disordered stretch occupies residues 612 to 650 (QQAGAAGAAGAAEGAAHAGGAQQAADDVVDAEFKEVKKD).

It belongs to the heat shock protein 70 family.

Functionally, acts as a chaperone. The sequence is that of Chaperone protein DnaK from Burkholderia ambifaria (strain ATCC BAA-244 / DSM 16087 / CCUG 44356 / LMG 19182 / AMMD) (Burkholderia cepacia (strain AMMD)).